We begin with the raw amino-acid sequence, 171 residues long: 3-hydroxydecanoyl-[acyl-carrier-protein] dehydratase (171 aa).

Residue His-70 is part of the active site.

This sequence belongs to the thioester dehydratase family. FabA subfamily. As to quaternary structure, homodimer.

Its subcellular location is the cytoplasm. It catalyses the reaction a (3R)-hydroxyacyl-[ACP] = a (2E)-enoyl-[ACP] + H2O. The catalysed reaction is (3R)-hydroxydecanoyl-[ACP] = (2E)-decenoyl-[ACP] + H2O. It carries out the reaction (2E)-decenoyl-[ACP] = (3Z)-decenoyl-[ACP]. Its pathway is lipid metabolism; fatty acid biosynthesis. Its function is as follows. Necessary for the introduction of cis unsaturation into fatty acids. Catalyzes the dehydration of (3R)-3-hydroxydecanoyl-ACP to E-(2)-decenoyl-ACP and then its isomerization to Z-(3)-decenoyl-ACP. Can catalyze the dehydratase reaction for beta-hydroxyacyl-ACPs with saturated chain lengths up to 16:0, being most active on intermediate chain length. This Hydrogenovibrio crunogenus (strain DSM 25203 / XCL-2) (Thiomicrospira crunogena) protein is 3-hydroxydecanoyl-[acyl-carrier-protein] dehydratase.